Here is a 339-residue protein sequence, read N- to C-terminus: Fructose-1,6-bisphosphatase, cytosolic (339 aa).

Mg(2+) contacts are provided by Glu-70, Glu-99, Asp-120, Leu-122, and Asp-123. Residues 123 to 126, Asn-214, Tyr-246, Tyr-266, and Lys-276 each bind substrate; that span reads DGSS. Glu-282 contacts Mg(2+).

It belongs to the FBPase class 1 family. Mg(2+) serves as cofactor.

It is found in the cytoplasm. The catalysed reaction is beta-D-fructose 1,6-bisphosphate + H2O = beta-D-fructose 6-phosphate + phosphate. This Brassica napus (Rape) protein is Fructose-1,6-bisphosphatase, cytosolic.